A 282-amino-acid polypeptide reads, in one-letter code: Aquaporin PIP-type (282 aa).

The next 2 helical transmembrane spans lie at 39–61 and 74–96; these read WRAA…ATVI and GLLG…TAGI. Residues 102 to 104 carry the NPA 1 motif; sequence NPA. 4 consecutive transmembrane segments (helical) span residues 116 to 138, 159 to 181, 201 to 223, and 243 to 265; these read SLLR…VGLV, GYNK…YTVF, LPIG…TGIN, and HWIF…QYVL. Residues 223-225 carry the NPA 2 motif; that stretch reads NPA.

It belongs to the MIP/aquaporin (TC 1.A.8) family. PIP (TC 1.A.8.11) subfamily.

The protein resides in the membrane. Water-specific channel. This chain is Aquaporin PIP-type, found in Atriplex canescens (Fourwing saltbush).